We begin with the raw amino-acid sequence, 464 residues long: Kynureninase 2 (464 aa).

Residues L135, T136, 163 to 166, D248, H251, and Y273 contribute to the pyridoxal 5'-phosphate site; that span reads FPSD. K274 is subject to N6-(pyridoxal phosphate)lysine. Pyridoxal 5'-phosphate is bound by residues W313 and N341.

This sequence belongs to the kynureninase family. In terms of assembly, homodimer. It depends on pyridoxal 5'-phosphate as a cofactor.

The protein resides in the cytoplasm. The enzyme catalyses L-kynurenine + H2O = anthranilate + L-alanine + H(+). It catalyses the reaction 3-hydroxy-L-kynurenine + H2O = 3-hydroxyanthranilate + L-alanine + H(+). Its pathway is amino-acid degradation; L-kynurenine degradation; L-alanine and anthranilate from L-kynurenine: step 1/1. It participates in cofactor biosynthesis; NAD(+) biosynthesis; quinolinate from L-kynurenine: step 2/3. Catalyzes the cleavage of L-kynurenine (L-Kyn) and L-3-hydroxykynurenine (L-3OHKyn) into anthranilic acid (AA) and 3-hydroxyanthranilic acid (3-OHAA), respectively. This chain is Kynureninase 2 (bna5-2), found in Aspergillus clavatus (strain ATCC 1007 / CBS 513.65 / DSM 816 / NCTC 3887 / NRRL 1 / QM 1276 / 107).